The primary structure comprises 249 residues: UPF0246 protein EUBREC_1226 (249 aa).

It belongs to the UPF0246 family.

In Agathobacter rectalis (strain ATCC 33656 / DSM 3377 / JCM 17463 / KCTC 5835 / VPI 0990) (Eubacterium rectale), this protein is UPF0246 protein EUBREC_1226.